The sequence spans 101 residues: Interleukin-8 (101 aa).

A signal peptide spans 1-22; sequence MTSKLAIALLAAFLLSAALCKA. Arg27 bears the Citrulline mark. 2 cysteine pairs are disulfide-bonded: Cys34–Cys61 and Cys36–Cys77.

Belongs to the intercrine alpha (chemokine CxC) family. As to quaternary structure, homodimer. Post-translationally, citrullination at Arg-27 prevents proteolysis, and dampens tissue inflammation, it also enhances leukocytosis, possibly through impaired chemokine clearance from the blood circulation.

Its subcellular location is the secreted. In terms of biological role, chemotactic factor that mediates inflammatory response by attracting neutrophils, basophils, and T-cells to clear pathogens and protect the host from infection. Also plays an important role in neutrophil activation. Released in response to an inflammatory stimulus, exerts its effect by binding to the G-protein-coupled receptors CXCR1 and CXCR2, primarily found in neutrophils, monocytes and endothelial cells. G-protein heterotrimer (alpha, beta, gamma subunits) constitutively binds to CXCR1/CXCR2 receptor and activation by IL8 leads to beta and gamma subunits release from Galpha (GNAI2 in neutrophils) and activation of several downstream signaling pathways including PI3K and MAPK pathways. This is Interleukin-8 (CXCL8) from Tursiops truncatus (Atlantic bottle-nosed dolphin).